We begin with the raw amino-acid sequence, 2197 residues long: Activating signal cointegrator 1 complex subunit 3 (2197 aa).

The residue at position 12 (Ser12) is a Phosphoserine. Coiled coils occupy residues 18–80 (KQDN…AKQI) and 328–356 (IQSE…KAGE). The 184-residue stretch at 487–670 (DTAYNTNENM…FLHVNPYIGL (184 aa)) folds into the Helicase ATP-binding 1 domain. Position 500–507 (500–507 (APTGAGKT)) interacts with ATP. The residue at position 573 (Lys573) is an N6-acetyllysine. The DEVH box signature appears at 612-615 (DEVH). One can recognise a Helicase C-terminal 1 domain in the interval 697–915 (QLNNMDEVCY…GTVTNVEEAV (219 aa)). The region spanning 979–1288 (STDLGRTASH…GAEAVCIINF (310 aa)) is the SEC63 1 domain. The region spanning 1337–1512 (HTLYHTDCNV…WLNIKQMGLF (176 aa)) is the Helicase ATP-binding 2 domain. Residue 1350–1357 (APTGSGKT) participates in ATP binding. Residues 1454-1457 (DEIH) carry the DEIH box motif. In terms of domain architecture, Helicase C-terminal 2 spans 1565 to 1739 (RMLSSMTKLE…VLSDHLNAEI (175 aa)). An SEC63 2 domain is found at 1812–2175 (PLTCGRIASY…YLGLDQQYDI (364 aa)).

It belongs to the helicase family. Identified in the ASCC complex that contains ASCC1, ASCC2 and ASCC3. Functions as a scaffolding subunit that interacts directly with both ASCC1 and ASCC2. Interacts directly with ALKBH3, and thereby recruits ALKBH3 to the ASCC complex. Part of the ASC-1/TRIP4 complex, that contains TRIP4, ASCC1, ASCC2 and ASCC3. Part of the RQT (ribosome quality control trigger) complex, that contains ASCC2, ASCC3 and TRIP4. Associates with ribosomes; recruited to collided ribosomes. Interacts with ZCCHC4. Interacts with ZNF598. Interacts with RPS3.

It is found in the nucleus. The protein localises to the nucleus speckle. Its subcellular location is the cytoplasm. It localises to the cytosol. The enzyme catalyses Couples ATP hydrolysis with the unwinding of duplex DNA by translocating in the 3'-5' direction.. The catalysed reaction is ATP + H2O = ADP + phosphate + H(+). Functionally, ATPase involved both in DNA repair and rescue of stalled ribosomes. 3'-5' DNA helicase involved in repair of alkylated DNA: promotes DNA unwinding to generate single-stranded substrate needed for ALKBH3, enabling ALKBH3 to process alkylated N3-methylcytosine (3mC) within double-stranded regions. Also involved in activation of the ribosome quality control (RQC) pathway, a pathway that degrades nascent peptide chains during problematic translation. Drives the splitting of stalled ribosomes that are ubiquitinated in a ZNF598-dependent manner, as part of the ribosome quality control trigger (RQT) complex. Part of the ASC-1 complex that enhances NF-kappa-B, SRF and AP1 transactivation. The sequence is that of Activating signal cointegrator 1 complex subunit 3 (Ascc3) from Rattus norvegicus (Rat).